The chain runs to 125 residues: Large ribosomal subunit protein bL12 (125 aa).

The protein belongs to the bacterial ribosomal protein bL12 family. As to quaternary structure, homodimer. Part of the ribosomal stalk of the 50S ribosomal subunit. Forms a multimeric L10(L12)X complex, where L10 forms an elongated spine to which 2 to 4 L12 dimers bind in a sequential fashion. Binds GTP-bound translation factors.

In terms of biological role, forms part of the ribosomal stalk which helps the ribosome interact with GTP-bound translation factors. Is thus essential for accurate translation. The sequence is that of Large ribosomal subunit protein bL12 from Rhizobium johnstonii (strain DSM 114642 / LMG 32736 / 3841) (Rhizobium leguminosarum bv. viciae).